The following is a 435-amino-acid chain: Serine--tRNA ligase (435 aa).

The disordered stretch occupies residues 48 to 68 (MKAQRNEASKKIGEAKRNGES). Residues 49-68 (KAQRNEASKKIGEAKRNGES) show a composition bias toward basic and acidic residues. 230–232 (TAE) is a binding site for L-serine. An ATP-binding site is contributed by 261–263 (RSE). An L-serine-binding site is contributed by Glu-284. 348-351 (EVSS) is a binding site for ATP. Ser-383 is a binding site for L-serine.

The protein belongs to the class-II aminoacyl-tRNA synthetase family. Type-1 seryl-tRNA synthetase subfamily. Homodimer. The tRNA molecule binds across the dimer.

The protein resides in the cytoplasm. The enzyme catalyses tRNA(Ser) + L-serine + ATP = L-seryl-tRNA(Ser) + AMP + diphosphate + H(+). It carries out the reaction tRNA(Sec) + L-serine + ATP = L-seryl-tRNA(Sec) + AMP + diphosphate + H(+). The protein operates within aminoacyl-tRNA biosynthesis; selenocysteinyl-tRNA(Sec) biosynthesis; L-seryl-tRNA(Sec) from L-serine and tRNA(Sec): step 1/1. Functionally, catalyzes the attachment of serine to tRNA(Ser). Is also able to aminoacylate tRNA(Sec) with serine, to form the misacylated tRNA L-seryl-tRNA(Sec), which will be further converted into selenocysteinyl-tRNA(Sec). The protein is Serine--tRNA ligase of Limosilactobacillus reuteri (strain DSM 20016) (Lactobacillus reuteri).